Consider the following 88-residue polypeptide: Small ribosomal subunit protein bS20 (88 aa).

It belongs to the bacterial ribosomal protein bS20 family.

Its function is as follows. Binds directly to 16S ribosomal RNA. This chain is Small ribosomal subunit protein bS20, found in Coprothermobacter proteolyticus (strain ATCC 35245 / DSM 5265 / OCM 4 / BT).